Here is a 213-residue protein sequence, read N- to C-terminus: Kynurenine formamidase (213 aa).

Trp18 contributes to the substrate binding site. Zn(2+) contacts are provided by His48, His52, and Asp54. The Proton donor/acceptor role is filled by His58. Residues His160 and Glu172 each contribute to the Zn(2+) site.

It belongs to the Cyclase 1 superfamily. KynB family. As to quaternary structure, homodimer. It depends on Zn(2+) as a cofactor.

It carries out the reaction N-formyl-L-kynurenine + H2O = L-kynurenine + formate + H(+). It participates in amino-acid degradation; L-tryptophan degradation via kynurenine pathway; L-kynurenine from L-tryptophan: step 2/2. Catalyzes the hydrolysis of N-formyl-L-kynurenine to L-kynurenine, the second step in the kynurenine pathway of tryptophan degradation. The chain is Kynurenine formamidase from Burkholderia pseudomallei (strain 1710b).